The sequence spans 322 residues: Lipoyl synthase (322 aa).

The [4Fe-4S] cluster site is built by Cys61, Cys66, Cys72, Cys87, Cys91, Cys94, and Ser300. Residues 73-289 (WDKKHATFMI…ETVAYTKGFL (217 aa)) form the Radical SAM core domain.

It belongs to the radical SAM superfamily. Lipoyl synthase family. It depends on [4Fe-4S] cluster as a cofactor.

The protein resides in the cytoplasm. It catalyses the reaction [[Fe-S] cluster scaffold protein carrying a second [4Fe-4S](2+) cluster] + N(6)-octanoyl-L-lysyl-[protein] + 2 oxidized [2Fe-2S]-[ferredoxin] + 2 S-adenosyl-L-methionine + 4 H(+) = [[Fe-S] cluster scaffold protein] + N(6)-[(R)-dihydrolipoyl]-L-lysyl-[protein] + 4 Fe(3+) + 2 hydrogen sulfide + 2 5'-deoxyadenosine + 2 L-methionine + 2 reduced [2Fe-2S]-[ferredoxin]. Its pathway is protein modification; protein lipoylation via endogenous pathway; protein N(6)-(lipoyl)lysine from octanoyl-[acyl-carrier-protein]: step 2/2. In terms of biological role, catalyzes the radical-mediated insertion of two sulfur atoms into the C-6 and C-8 positions of the octanoyl moiety bound to the lipoyl domains of lipoate-dependent enzymes, thereby converting the octanoylated domains into lipoylated derivatives. This Rhizobium meliloti (strain 1021) (Ensifer meliloti) protein is Lipoyl synthase.